Reading from the N-terminus, the 1396-residue chain is DNA-directed RNA polymerase subunit beta' (1396 aa).

Zn(2+)-binding residues include C72, C74, C87, and C90. Positions 463, 465, and 467 each coordinate Mg(2+). C814, C889, C896, and C899 together coordinate Zn(2+).

It belongs to the RNA polymerase beta' chain family. As to quaternary structure, the RNAP catalytic core consists of 2 alpha, 1 beta, 1 beta' and 1 omega subunit. When a sigma factor is associated with the core the holoenzyme is formed, which can initiate transcription. The cofactor is Mg(2+). Zn(2+) serves as cofactor.

The catalysed reaction is RNA(n) + a ribonucleoside 5'-triphosphate = RNA(n+1) + diphosphate. Functionally, DNA-dependent RNA polymerase catalyzes the transcription of DNA into RNA using the four ribonucleoside triphosphates as substrates. The polypeptide is DNA-directed RNA polymerase subunit beta' (Chlamydia muridarum (strain MoPn / Nigg)).